The chain runs to 479 residues: Pup--protein ligase (479 aa).

A Mg(2+)-binding site is contributed by E17. Position 62 (R62) interacts with ATP. Y64 provides a ligand contact to Mg(2+). D66 acts as the Proton acceptor in catalysis. E72 lines the Mg(2+) pocket. Positions 75 and 432 each coordinate ATP.

Belongs to the Pup ligase/Pup deamidase family. Pup-conjugating enzyme subfamily.

The enzyme catalyses ATP + [prokaryotic ubiquitin-like protein]-L-glutamate + [protein]-L-lysine = ADP + phosphate + N(6)-([prokaryotic ubiquitin-like protein]-gamma-L-glutamyl)-[protein]-L-lysine.. It functions in the pathway protein degradation; proteasomal Pup-dependent pathway. The protein operates within protein modification; protein pupylation. Functionally, catalyzes the covalent attachment of the prokaryotic ubiquitin-like protein modifier Pup to the proteasomal substrate proteins, thereby targeting them for proteasomal degradation. This tagging system is termed pupylation. The ligation reaction involves the side-chain carboxylate of the C-terminal glutamate of Pup and the side-chain amino group of a substrate lysine. The protein is Pup--protein ligase of Corynebacterium diphtheriae (strain ATCC 700971 / NCTC 13129 / Biotype gravis).